Consider the following 135-residue polypeptide: Large-conductance mechanosensitive channel (135 aa).

2 helical membrane passes run 10–30 (FAMRGNVVDLAVGVIIGAAFG) and 76–96 (GVFIQNVFDFVIVAFAIFLAI).

Belongs to the MscL family. In terms of assembly, homopentamer.

Its subcellular location is the cell inner membrane. Its function is as follows. Channel that opens in response to stretch forces in the membrane lipid bilayer. May participate in the regulation of osmotic pressure changes within the cell. The polypeptide is Large-conductance mechanosensitive channel (Cronobacter sakazakii (strain ATCC BAA-894) (Enterobacter sakazakii)).